The sequence spans 70 residues: Large ribosomal subunit protein bL28 (70 aa).

Residues 1–26 are disordered; it reads MAKRCEVCGKAPRSGNTVSHSDKKSG.

It belongs to the bacterial ribosomal protein bL28 family.

This chain is Large ribosomal subunit protein bL28 (rpmB), found in Thermotoga maritima (strain ATCC 43589 / DSM 3109 / JCM 10099 / NBRC 100826 / MSB8).